The primary structure comprises 404 residues: CCA-adding enzyme (404 aa).

Positions 27 and 30 each coordinate ATP. Gly27 and Arg30 together coordinate CTP. Mg(2+) is bound by residues Asp40 and Asp42. 5 residues coordinate ATP: Arg111, Asp154, Arg157, Arg160, and Arg163. CTP is bound by residues Arg111, Asp154, Arg157, Arg160, and Arg163.

The protein belongs to the tRNA nucleotidyltransferase/poly(A) polymerase family. Bacterial CCA-adding enzyme type 3 subfamily. In terms of assembly, homodimer. Mg(2+) serves as cofactor.

It catalyses the reaction a tRNA precursor + 2 CTP + ATP = a tRNA with a 3' CCA end + 3 diphosphate. The catalysed reaction is a tRNA with a 3' CCA end + 2 CTP + ATP = a tRNA with a 3' CCACCA end + 3 diphosphate. Its function is as follows. Catalyzes the addition and repair of the essential 3'-terminal CCA sequence in tRNAs without using a nucleic acid template. Adds these three nucleotides in the order of C, C, and A to the tRNA nucleotide-73, using CTP and ATP as substrates and producing inorganic pyrophosphate. tRNA 3'-terminal CCA addition is required both for tRNA processing and repair. Also involved in tRNA surveillance by mediating tandem CCA addition to generate a CCACCA at the 3' terminus of unstable tRNAs. While stable tRNAs receive only 3'-terminal CCA, unstable tRNAs are marked with CCACCA and rapidly degraded. In Geobacillus sp. (strain WCH70), this protein is CCA-adding enzyme.